The sequence spans 274 residues: Large ribosomal subunit protein uL2 (274 aa).

2 disordered regions span residues 40–59 (SGGRNNLGRVTRRHQGGGHK) and 223–274 (VAMN…RRSR). Composition is skewed to basic residues over residues 49–59 (VTRRHQGGGHK) and 256–274 (YRTRRNKRTSNMIVRRRSR).

This sequence belongs to the universal ribosomal protein uL2 family. As to quaternary structure, part of the 50S ribosomal subunit. Forms a bridge to the 30S subunit in the 70S ribosome.

One of the primary rRNA binding proteins. Required for association of the 30S and 50S subunits to form the 70S ribosome, for tRNA binding and peptide bond formation. It has been suggested to have peptidyltransferase activity; this is somewhat controversial. Makes several contacts with the 16S rRNA in the 70S ribosome. This chain is Large ribosomal subunit protein uL2, found in Acidithiobacillus ferrooxidans (strain ATCC 23270 / DSM 14882 / CIP 104768 / NCIMB 8455) (Ferrobacillus ferrooxidans (strain ATCC 23270)).